Consider the following 227-residue polypeptide: Probable septum site-determining protein MinC (227 aa).

This sequence belongs to the MinC family. As to quaternary structure, interacts with MinD and FtsZ.

Functionally, cell division inhibitor that blocks the formation of polar Z ring septums. Rapidly oscillates between the poles of the cell to destabilize FtsZ filaments that have formed before they mature into polar Z rings. Prevents FtsZ polymerization. The protein is Probable septum site-determining protein MinC of Laribacter hongkongensis (strain HLHK9).